The chain runs to 315 residues: Methionyl-tRNA formyltransferase (315 aa).

Position 113 to 116 (113 to 116 (SLLP)) interacts with (6S)-5,6,7,8-tetrahydrofolate.

This sequence belongs to the Fmt family.

It carries out the reaction L-methionyl-tRNA(fMet) + (6R)-10-formyltetrahydrofolate = N-formyl-L-methionyl-tRNA(fMet) + (6S)-5,6,7,8-tetrahydrofolate + H(+). Functionally, attaches a formyl group to the free amino group of methionyl-tRNA(fMet). The formyl group appears to play a dual role in the initiator identity of N-formylmethionyl-tRNA by promoting its recognition by IF2 and preventing the misappropriation of this tRNA by the elongation apparatus. In Escherichia coli O45:K1 (strain S88 / ExPEC), this protein is Methionyl-tRNA formyltransferase.